The sequence spans 118 residues: NADH-quinone oxidoreductase subunit A (118 aa).

3 helical membrane passes run 5 to 25 (YLGI…AFAV), 61 to 81 (FLYA…YPWA), and 90 to 110 (FAIV…WYAW).

The protein belongs to the complex I subunit 3 family. In terms of assembly, NDH-1 is composed of 14 different subunits. Subunits NuoA, H, J, K, L, M, N constitute the membrane sector of the complex.

It is found in the cell membrane. The enzyme catalyses a quinone + NADH + 5 H(+)(in) = a quinol + NAD(+) + 4 H(+)(out). NDH-1 shuttles electrons from NADH, via FMN and iron-sulfur (Fe-S) centers, to quinones in the respiratory chain. The immediate electron acceptor for the enzyme in this species is believed to be a menaquinone. Couples the redox reaction to proton translocation (for every two electrons transferred, four hydrogen ions are translocated across the cytoplasmic membrane), and thus conserves the redox energy in a proton gradient. The polypeptide is NADH-quinone oxidoreductase subunit A (Heliobacterium modesticaldum (strain ATCC 51547 / Ice1)).